Here is a 280-residue protein sequence, read N- to C-terminus: Pupal cuticle protein 36a (280 aa).

The signal sequence occupies residues Met-1–Ala-15. In terms of domain architecture, Chitin-binding type R&amp;R spans Ala-135–Pro-198. Positions Gly-258–Met-280 are disordered.

The polypeptide is Pupal cuticle protein 36a (PCP36a) (Manduca sexta (Tobacco hawkmoth)).